Here is a 237-residue protein sequence, read N- to C-terminus: Uridylate kinase (237 aa).

9–12 serves as a coordination point for ATP; it reads KLSG. G51 contributes to the UMP binding site. Residues G52 and R56 each contribute to the ATP site. Residues D71 and 132–139 each bind UMP; that span reads CGNPFFTT. ATP-binding residues include T159, Y165, and D168.

This sequence belongs to the UMP kinase family. In terms of assembly, homohexamer.

It localises to the cytoplasm. The catalysed reaction is UMP + ATP = UDP + ADP. The protein operates within pyrimidine metabolism; CTP biosynthesis via de novo pathway; UDP from UMP (UMPK route): step 1/1. With respect to regulation, inhibited by UTP. Functionally, catalyzes the reversible phosphorylation of UMP to UDP. The chain is Uridylate kinase from Prochlorococcus marinus (strain MIT 9313).